A 112-amino-acid chain; its full sequence is Large ribosomal subunit protein uL22 (112 aa).

It belongs to the universal ribosomal protein uL22 family. As to quaternary structure, part of the 50S ribosomal subunit.

Its function is as follows. This protein binds specifically to 23S rRNA; its binding is stimulated by other ribosomal proteins, e.g. L4, L17, and L20. It is important during the early stages of 50S assembly. It makes multiple contacts with different domains of the 23S rRNA in the assembled 50S subunit and ribosome. The globular domain of the protein is located near the polypeptide exit tunnel on the outside of the subunit, while an extended beta-hairpin is found that lines the wall of the exit tunnel in the center of the 70S ribosome. In Mesoplasma florum (strain ATCC 33453 / NBRC 100688 / NCTC 11704 / L1) (Acholeplasma florum), this protein is Large ribosomal subunit protein uL22.